The sequence spans 498 residues: Glutamate--tRNA ligase (498 aa).

A 'HIGH' region motif is present at residues 10–20; that stretch reads PSPTGYFHIGG. A 'KMSKS' region motif is present at residues 252–256; it reads KLSKR. Residue K255 participates in ATP binding.

The protein belongs to the class-I aminoacyl-tRNA synthetase family. Glutamate--tRNA ligase type 1 subfamily. As to quaternary structure, monomer.

It localises to the cytoplasm. It carries out the reaction tRNA(Glu) + L-glutamate + ATP = L-glutamyl-tRNA(Glu) + AMP + diphosphate. In terms of biological role, catalyzes the attachment of glutamate to tRNA(Glu) in a two-step reaction: glutamate is first activated by ATP to form Glu-AMP and then transferred to the acceptor end of tRNA(Glu). The protein is Glutamate--tRNA ligase of Mycoplasmoides gallisepticum (strain R(low / passage 15 / clone 2)) (Mycoplasma gallisepticum).